The sequence spans 124 residues: Fluoride-specific ion channel FluC 1 (124 aa).

4 helical membrane passes run 1-21 (MCAVSLTKPVAVVALGGALGA), 30-50 (LWPGIWTVLLINVVGSLLLGY), 64-84 (FLGVGVLGGFTTFSTFAVDAV), and 93-113 (LYVVATLIPALLAARLGMLAG). Na(+) contacts are provided by Gly71 and Thr74.

This sequence belongs to the fluoride channel Fluc/FEX (TC 1.A.43) family.

The protein localises to the cell membrane. It catalyses the reaction fluoride(in) = fluoride(out). Its activity is regulated as follows. Na(+) is not transported, but it plays an essential structural role and its presence is essential for fluoride channel function. In terms of biological role, fluoride-specific ion channel. Important for reducing fluoride concentration in the cell, thus reducing its toxicity. This chain is Fluoride-specific ion channel FluC 1, found in Rhodococcus jostii (strain RHA1).